The following is a 109-amino-acid chain: Staphostatin B (109 aa).

A binds to staphopain B region spans residues 97–101 (IGTSR).

It belongs to the protease inhibitor I57 (SspC) family. As to quaternary structure, forms a stable non-covalent complex with prematurely activated/folded SspB.

It localises to the cytoplasm. Its function is as follows. Specifically inhibits the cysteine protease staphopain B (SspB) by blocking the active site of the enzyme. Probably required to protect cytoplasmic proteins from being degraded by prematurely activated/folded prostaphopain B. Also involved in growth capacity, viability and bacterial morphology. This chain is Staphostatin B (sspC), found in Staphylococcus aureus (strain MRSA252).